Here is a 77-residue protein sequence, read N- to C-terminus: MKLIIFTGLVLFAIVSLIEVQADNERACLPQYQVCTDAPGNCCSNLVCDCYGRYKSGARRGRNCFCLQKGVIYKREN.

The signal sequence occupies residues 1 to 20 (MKLIIFTGLVLFAIVSLIEV). Positions 21–26 (QADNER) are excised as a propeptide.

The protein belongs to the neurotoxin 19 (CSTX) family. 08 (U8-Lctx) subfamily. In terms of processing, contains 4 disulfide bonds. As to expression, expressed by the venom gland.

It localises to the secreted. In Lycosa singoriensis (Wolf spider), this protein is U8-lycotoxin-Ls1h.